The sequence spans 513 residues: ETS translocation variant 3 (513 aa).

The segment at residues 35–116 (IQLWHFILEL…KGKRFTYKFN (82 aa)) is a DNA-binding region (ETS). Residues 138 to 202 (QSAPPVPTAS…DLEDGSASDW (65 aa)) are disordered. Phosphoserine occurs at positions 139, 159, and 315. The interval 333 to 513 (QMHPEEPSQF…ATTATAAADA (181 aa)) is disordered. Composition is skewed to basic and acidic residues over residues 357–366 (ERVESREEAV), 380–392 (IKVE…DPDS), and 399–419 (GKEE…EEGK). Lys381 participates in a covalent cross-link: Glycyl lysine isopeptide (Lys-Gly) (interchain with G-Cter in SUMO2). N6-acetyllysine; alternate is present on Lys388. Lys388 is covalently cross-linked (Glycyl lysine isopeptide (Lys-Gly) (interchain with G-Cter in SUMO2); alternate). Residues 430 to 439 (WPSVSISTPS) are compositionally biased toward polar residues. Residues 441 to 450 (EPLEGTEDSE) show a composition bias toward acidic residues. Basic and acidic residues-rich tracts occupy residues 451–466 (DRSV…KEDA) and 477–489 (RWND…ELNK). Low complexity predominate over residues 504–513 (ATTATAAADA).

The protein belongs to the ETS family.

The protein localises to the nucleus. Transcriptional repressor that contribute to growth arrest during terminal macrophage differentiation by repressing target genes involved in Ras-dependent proliferation. Represses MMP1 promoter activity. The protein is ETS translocation variant 3 (Etv3) of Mus musculus (Mouse).